Here is a 589-residue protein sequence, read N- to C-terminus: Phenylalanine--tRNA ligase beta subunit (589 aa).

The B5 domain occupies 302–379; that stretch reads LAYRKEMVRA…IAYGYNNIQM (78 aa). Mg(2+) is bound by residues Asp357, Asp363, Glu366, and Asp367.

This sequence belongs to the phenylalanyl-tRNA synthetase beta subunit family. Type 2 subfamily. In terms of assembly, heterotetramer; dimer of two heterodimers formed by FARSA and FARSB. Mg(2+) is required as a cofactor.

The protein localises to the cytoplasm. It catalyses the reaction tRNA(Phe) + L-phenylalanine + ATP = L-phenylalanyl-tRNA(Phe) + AMP + diphosphate + H(+). The polypeptide is Phenylalanine--tRNA ligase beta subunit (FARSB) (Homo sapiens (Human)).